The chain runs to 208 residues: MARYIGPKCKLSRREGTDLQLKSGVKPFDVKTKKANKAPGQHGQARGGKQSEYSLQLREKQKVRRIYGVLERQFSNYYKEAARVKGATGENLLKLLESRLDNVVYRMGFGSTRAEARQLVSHRSITLNGRRVNIASIQVKSGDVIAVHEGAKQQLRIKNAIELAAQRGIPAWIEVDHSKLEGTFKAAPDRSDLPAEINESLIVELYSK.

The disordered stretch occupies residues 24–52 (GVKPFDVKTKKANKAPGQHGQARGGKQSE). The S4 RNA-binding domain occupies 98 to 160 (SRLDNVVYRM…AKQQLRIKNA (63 aa)).

It belongs to the universal ribosomal protein uS4 family. As to quaternary structure, part of the 30S ribosomal subunit. Contacts protein S5. The interaction surface between S4 and S5 is involved in control of translational fidelity.

One of the primary rRNA binding proteins, it binds directly to 16S rRNA where it nucleates assembly of the body of the 30S subunit. Its function is as follows. With S5 and S12 plays an important role in translational accuracy. This is Small ribosomal subunit protein uS4 from Acinetobacter baumannii (strain ACICU).